The sequence spans 542 residues: Probable quinate permease (542 aa).

The Cytoplasmic segment spans residues 1-22 (MSILALVEDRPTPKEVYNWRIY). Residues 23–43 (LLAAVASFTSCMIGYDSAFIG) traverse the membrane as a helical segment. The Extracellular segment spans residues 44 to 66 (TTLALSSFREEFGFNTMSKTAVN). The helical transmembrane segment at 67–87 (LVSANIVSCYQAGAFFGAFLA) threads the bilayer. Over 88-97 (YPVGHFWGRK) the chain is Cytoplasmic. The chain crosses the membrane as a helical span at residues 98 to 118 (WGLLFSGAIFTLGAGLMLGAD). The Extracellular segment spans residues 119-130 (GDRGLGLLYGGR). The chain crosses the membrane as a helical span at residues 131-151 (VLAGLGVGAGSNITPIYISEM). Residues 152–159 (APPSIRGR) are Cytoplasmic-facing. A helical transmembrane segment spans residues 160 to 180 (LVGVYELGWQIGGLVGFWINY). Residues 181 to 193 (GVSETLAPSHKQW) lie on the Extracellular side of the membrane. A helical transmembrane segment spans residues 194-214 (IIPFAVQLIPSGLLLIGAVFL). Residues 215 to 285 (KESPRWLFSR…AGTNKKVMYR (71 aa)) are Cytoplasmic-facing. The helical transmembrane segment at 286–306 (LFLGSMLFFWQNGSGINAINY) threads the bilayer. The Extracellular segment spans residues 307–325 (YSPTVFKSIGLQGANTSMF). A helical membrane pass occupies residues 326–346 (STGIFGVVKTVVTFVWLLYLI). At 347–352 (DRLGRR) the chain is on the cytoplasmic side. The helical transmembrane segment at 353–373 (LLLLIGAAGASVCLFIVGAYI) threads the bilayer. Residues 374–387 (KIADPASNPTQEMT) lie on the Extracellular side of the membrane. Residues 388–408 (GGGIAAMFFFYLYTVFYTPSW) form a helical membrane-spanning segment. Topologically, residues 409–456 (NGTPWVMNSEMFEPNMRSLAQACAAASNWFWNFLISRFTPQMFAKMEY) are cytoplasmic. A helical membrane pass occupies residues 457 to 477 (GVWFFFASLMVLSIVFVFFLL). Residues 478–542 (PETKGIPLES…EHLSEDLPKV (65 aa)) are Extracellular-facing. The tract at residues 519-542 (IEESGYSKTGDQQVEHLSEDLPKV) is disordered. A compositionally biased stretch (basic and acidic residues) spans 531-542 (QVEHLSEDLPKV).

It belongs to the major facilitator superfamily. Sugar transporter (TC 2.A.1.1) family. In terms of assembly, interacts with creB. Post-translationally, ubiquitinated. Deubiquitinated by creB, probably to control its activity or amount.

Its subcellular location is the cell membrane. Its function is as follows. Integral membrane transporter that imports quinic acid to be catabolized as a carbon source. This is Probable quinate permease (qutD) from Neosartorya fischeri (strain ATCC 1020 / DSM 3700 / CBS 544.65 / FGSC A1164 / JCM 1740 / NRRL 181 / WB 181) (Aspergillus fischerianus).